The chain runs to 132 residues: Long-chain acyl-CoA thioesterase FadM (132 aa).

The active site involves aspartate 13.

The protein belongs to the 4-hydroxybenzoyl-CoA thioesterase family. As to quaternary structure, homotetramer.

The catalysed reaction is (3E,5Z)-tetradecadienoyl-CoA + H2O = (3E,5Z)-tetradecadienoate + CoA + H(+). The enzyme catalyses (3E,5Z)-dodecadienoyl-CoA + H2O = (3E,5Z)-dodecadienoate + CoA + H(+). It carries out the reaction (9Z)-octadecenoyl-CoA + H2O = (9Z)-octadecenoate + CoA + H(+). It catalyses the reaction octadecanoyl-CoA + H2O = octadecanoate + CoA + H(+). The catalysed reaction is hexadecanoyl-CoA + H2O = hexadecanoate + CoA + H(+). The enzyme catalyses (3S)-hydroxytetradecanoyl-CoA + H2O = (3S)-hydroxytetradecanoate + CoA + H(+). It carries out the reaction tetradecanoyl-CoA + H2O = tetradecanoate + CoA + H(+). Functionally, long-chain acyl-CoA thioesterase that could be involved in beta-oxidation of fatty acids. Is most active with 3,5-tetradecadienoyl-CoA, a metabolite of oleic acid that is hydrolyzed during oleate beta-oxidation, but can also use other substrates such as 3,5-dodecadienoyl-CoA, 9-cis-octadecenoyl-CoA, octadecanoyl-CoA, hexadecanoyl-CoA, 3-hydroxytetradecanoyl-CoA and tetradecanoyl-CoA. The sequence is that of Long-chain acyl-CoA thioesterase FadM from Escherichia coli (strain K12).